The sequence spans 694 residues: Acetolactate synthase catalytic subunit, mitochondrial (694 aa).

A mitochondrion-targeting transit peptide spans 1 to 42 (MLRSRQATNALRAVGQTRPLRSQTAVAFTQSLNKVPSNRRSE). Low complexity predominate over residues 45–58 (VATASSTASGAFNS). Residues 45-69 (VATASSTASGAFNSQVRPTPSPTFN) form a disordered region. Positions 59 to 69 (QVRPTPSPTFN) are enriched in polar residues. Residue Glu-140 coordinates thiamine diphosphate. FAD contacts are provided by residues Arg-242, 358-379 (HGSAYANMAMQEADLIIALGGR), and 410-429 (EIMPKNINKVVEATEAIVGD). A thiamine pyrophosphate binding region spans residues 505–585 (QHQMWTAQHF…VKVIVLNNEE (81 aa)). Mg(2+) contacts are provided by Asp-556, Asn-583, and Glu-585.

This sequence belongs to the TPP enzyme family. As to quaternary structure, homodimer. Mg(2+) is required as a cofactor. Requires thiamine diphosphate as cofactor.

The protein resides in the mitochondrion. It carries out the reaction 2 pyruvate + H(+) = (2S)-2-acetolactate + CO2. It catalyses the reaction 2-oxobutanoate + pyruvate + H(+) = (S)-2-ethyl-2-hydroxy-3-oxobutanoate + CO2. It functions in the pathway amino-acid biosynthesis; L-isoleucine biosynthesis; L-isoleucine from 2-oxobutanoate: step 1/4. Its pathway is amino-acid biosynthesis; L-valine biosynthesis; L-valine from pyruvate: step 1/4. In terms of biological role, acetolactate synthase catalytic subunit, mitochondrial; part of the gene cluster that mediates the biosynthesis of chlorflavonin, a fungal flavonoid with acetolactate synthase inhibitory activity. Is not direcly involved in chlorflavonin biosynthesis but acts as a self-resistant protein that effectively confers chlorflavonin resistance to the native host. As a catalytic subunit of mitochondrial acetolactate synthase, catalyzes the first of a series of common steps in the biosynthesis of the branched-chain amino acids. Catalyzes the irreversible decarboxylation of pyruvate to a bound hydroxyethyl group that then condenses with either a second pyruvate molecule to form 2-acetolactate (AL) or with 2-ketobutyrate to form 2-aceto-2-hydroxybutyrate (AHB). The first product is the precursor for valine and leucine biosynthesis, while the second leads to isoleucine. In Aspergillus candidus, this protein is Acetolactate synthase catalytic subunit, mitochondrial.